The sequence spans 232 residues: MTVVDAESRFHVLAVDDSLIDRKLIEMLLKNSSYQVTTVDSGSKALELLGLRDEGDDSSSSPSSSSPDHQEIDVNLIITDYCMPGMTGYDLLKRVKGSSSLKDIPVVIMSSENVPARINRCLEDGAEEFFLKPVKLADMKKLKSHLLKRKQQLPMAAAAPDKPPHKPDEAAASAAAIAEAATAQTDGIISDCSCSGSSKRKAAAMEQEVISSPDQRTKPRLSSTSSGLAVET.

A Response regulatory domain is found at 11–147 (HVLAVDDSLI…DMKKLKSHLL (137 aa)). Asp80 bears the 4-aspartylphosphate mark. Disordered regions lie at residues 153-174 (LPMA…AASA) and 202-232 (AAAM…AVET). Positions 209-232 (VISSPDQRTKPRLSSTSSGLAVET) are enriched in polar residues.

Belongs to the ARR family. Type-A subfamily. In terms of processing, two-component system major event consists of a His-to-Asp phosphorelay between a sensor histidine kinase (HK) and a response regulator (RR). In plants, the His-to-Asp phosphorelay involves an additional intermediate named Histidine-containing phosphotransfer protein (HPt). This multistep phosphorelay consists of a His-Asp-His-Asp sequential transfer of a phosphate group between first a His and an Asp of the HK protein, followed by the transfer to a conserved His of the HPt protein and finally the transfer to an Asp in the receiver domain of the RR protein. As to expression, expressed in mature leaves and flowers, and at low levels in roots and shoots.

Functionally, functions as a response regulator involved in His-to-Asp phosphorelay signal transduction system. Phosphorylation of the Asp residue in the receiver domain activates the ability of the protein to promote the transcription of target genes. Type-A response regulators seem to act as negative regulators of the cytokinin signaling. The protein is Two-component response regulator ORR4 of Oryza sativa subsp. indica (Rice).